We begin with the raw amino-acid sequence, 306 residues long: D-alanine--D-alanine ligase (306 aa).

The ATP-grasp domain occupies 101–303 (KQVWQAVGLP…FSQLVVKILE (203 aa)). 134 to 189 (FTHLGLPLIVKPSREGSSVGMSKVNTLSELPAALEEAFRHDDDILVEKWLSGPEYT) contacts ATP. Asp-257, Glu-270, and Asn-272 together coordinate Mg(2+).

It belongs to the D-alanine--D-alanine ligase family. It depends on Mg(2+) as a cofactor. Mn(2+) serves as cofactor.

It localises to the cytoplasm. It catalyses the reaction 2 D-alanine + ATP = D-alanyl-D-alanine + ADP + phosphate + H(+). It participates in cell wall biogenesis; peptidoglycan biosynthesis. Cell wall formation. The chain is D-alanine--D-alanine ligase from Pectobacterium carotovorum subsp. carotovorum (strain PC1).